Here is a 264-residue protein sequence, read N- to C-terminus: 5'-nucleotidase SurE (264 aa).

A divalent metal cation contacts are provided by Asp9, Asp10, Ser40, and Asn95.

The protein belongs to the SurE nucleotidase family. It depends on a divalent metal cation as a cofactor.

The protein resides in the cytoplasm. It catalyses the reaction a ribonucleoside 5'-phosphate + H2O = a ribonucleoside + phosphate. In terms of biological role, nucleotidase that shows phosphatase activity on nucleoside 5'-monophosphates. The chain is 5'-nucleotidase SurE from Helicobacter hepaticus (strain ATCC 51449 / 3B1).